The sequence spans 416 residues: Enterobactin exporter EntS (416 aa).

At 1 to 21 (MNKQSWLLNLSLLKTHPAFRA) the chain is on the cytoplasmic side. The chain crosses the membrane as a helical span at residues 22–42 (VFLARFISIVSLGLLGVAVPV). Topologically, residues 43–55 (QIQMMTHSTWQVG) are periplasmic. Residues 56-76 (LSVTLTGGAMFVGLMVGGVLA) form a helical membrane-spanning segment. The Cytoplasmic portion of the chain corresponds to 77–83 (DRYERKK). The helical transmembrane segment at 84–104 (VILLARGTCGIGFIGLCLNAL) threads the bilayer. Residues 105 to 109 (LPEPS) lie on the Periplasmic side of the membrane. The helical transmembrane segment at 110 to 130 (LLAIYLLGLWDGFFASLGVTA) threads the bilayer. The Cytoplasmic segment spans residues 131–156 (LLAATPALVGRENLMQAGAITMLTVR). The helical transmembrane segment at 157 to 177 (LGSVISPMIGGLLLATGGVAW) threads the bilayer. Position 178 (Asn-178) is a topological domain, periplasmic. Residues 179-199 (YGLAAAGTFITLLPLLSLPAL) form a helical membrane-spanning segment. Over 200–218 (PPPPQPREHPLKSLLAGFR) the chain is Cytoplasmic. Residues 219–239 (FLLASPLVGGIALLGGLLTMA) traverse the membrane as a helical segment. The Periplasmic portion of the chain corresponds to 240 to 256 (SAVRVLYPALADNWQMS). Residues 257 to 277 (AAQIGFLYAAIPLGAAIGALT) traverse the membrane as a helical segment. Residues 278–287 (SGKLAHSVRP) lie on the Cytoplasmic side of the membrane. Residues 288–307 (GLLMLLSTLGAFLAIGLFGL) traverse the membrane as a helical segment. Residues 308-313 (MPMWIL) are Periplasmic-facing. A helical transmembrane segment spans residues 314 to 336 (GVVCLALFGWLSAVSSLLQYTML). The Cytoplasmic segment spans residues 337–356 (QTQTPEAMLGRINGLWTAQN). The chain crosses the membrane as a helical span at residues 357 to 377 (VTGDAIGAALLGGLGAMMTPV). Ala-378 is a topological domain (periplasmic). A helical membrane pass occupies residues 379-399 (SASASGFGLLIIGVLLLLVLV). The Cytoplasmic portion of the chain corresponds to 400–416 (ELRRFRQTPPQVTASGS).

This sequence belongs to the major facilitator superfamily. EntS (TC 2.A.1.38) family.

Its subcellular location is the cell inner membrane. Component of an export pathway for enterobactin. The sequence is that of Enterobactin exporter EntS from Escherichia coli O6:K15:H31 (strain 536 / UPEC).